A 363-amino-acid chain; its full sequence is 3-isopropylmalate dehydrogenase (363 aa).

Residue 78 to 91 (GPKWEHLPPDQQPE) coordinates NAD(+). Substrate contacts are provided by R99, R109, R138, and D227. Mg(2+) contacts are provided by D227, D251, and D255. 285–297 (GSAPDIAGKNIAN) is an NAD(+) binding site.

This sequence belongs to the isocitrate and isopropylmalate dehydrogenases family. LeuB type 1 subfamily. As to quaternary structure, homodimer. Requires Mg(2+) as cofactor. Mn(2+) serves as cofactor.

Its subcellular location is the cytoplasm. It carries out the reaction (2R,3S)-3-isopropylmalate + NAD(+) = 4-methyl-2-oxopentanoate + CO2 + NADH. It functions in the pathway amino-acid biosynthesis; L-leucine biosynthesis; L-leucine from 3-methyl-2-oxobutanoate: step 3/4. Its function is as follows. Catalyzes the oxidation of 3-carboxy-2-hydroxy-4-methylpentanoate (3-isopropylmalate) to 3-carboxy-4-methyl-2-oxopentanoate. The product decarboxylates to 4-methyl-2 oxopentanoate. In Shigella sonnei (strain Ss046), this protein is 3-isopropylmalate dehydrogenase.